Here is a 760-residue protein sequence, read N- to C-terminus: Elongation factor G, mitochondrial (760 aa).

A mitochondrion-targeting transit peptide spans 1–37 (MIRGMLPRGLRALRPSVSPTVVSSSLHRNFHSSIRRF). Positions 68-349 (SRLRNIGVSA…AVVDYLPQPN (282 aa)) constitute a tr-type G domain. GTP-binding positions include 77 to 84 (AHIDSGKT), 148 to 152 (DTPGH), and 202 to 205 (NKMD).

This sequence belongs to the TRAFAC class translation factor GTPase superfamily. Classic translation factor GTPase family. EF-G/EF-2 subfamily.

The protein localises to the mitochondrion. It participates in protein biosynthesis; polypeptide chain elongation. Mitochondrial GTPase that catalyzes the GTP-dependent ribosomal translocation step during translation elongation. During this step, the ribosome changes from the pre-translocational (PRE) to the post-translocational (POST) state as the newly formed A-site-bound peptidyl-tRNA and P-site-bound deacylated tRNA move to the P and E sites, respectively. Catalyzes the coordinated movement of the two tRNA molecules, the mRNA and conformational changes in the ribosome. This is Elongation factor G, mitochondrial from Meyerozyma guilliermondii (strain ATCC 6260 / CBS 566 / DSM 6381 / JCM 1539 / NBRC 10279 / NRRL Y-324) (Yeast).